The chain runs to 399 residues: S-adenosylmethionine synthase (399 aa).

His17 provides a ligand contact to ATP. Asp19 contributes to the Mg(2+) binding site. Residue Glu45 coordinates K(+). Glu58 and Gln101 together coordinate L-methionine. A flexible loop region spans residues 101-111; that stretch reads QSADIAMGVDQ. ATP-binding positions include 177–179, 244–245, Asp253, 259–260, Ala276, and Lys280; these read DGK, RF, and RK. Asp253 is a binding site for L-methionine. An L-methionine-binding site is contributed by Lys284.

This sequence belongs to the AdoMet synthase family. As to quaternary structure, homotetramer; dimer of dimers. Mg(2+) is required as a cofactor. Requires K(+) as cofactor.

Its subcellular location is the cytoplasm. The catalysed reaction is L-methionine + ATP + H2O = S-adenosyl-L-methionine + phosphate + diphosphate. It functions in the pathway amino-acid biosynthesis; S-adenosyl-L-methionine biosynthesis; S-adenosyl-L-methionine from L-methionine: step 1/1. In terms of biological role, catalyzes the formation of S-adenosylmethionine (AdoMet) from methionine and ATP. The overall synthetic reaction is composed of two sequential steps, AdoMet formation and the subsequent tripolyphosphate hydrolysis which occurs prior to release of AdoMet from the enzyme. This Bacillus cereus (strain G9842) protein is S-adenosylmethionine synthase.